The chain runs to 149 residues: Putative pre-16S rRNA nuclease (149 aa).

This sequence belongs to the YqgF nuclease family.

Its subcellular location is the cytoplasm. Could be a nuclease involved in processing of the 5'-end of pre-16S rRNA. This is Putative pre-16S rRNA nuclease from Burkholderia ambifaria (strain MC40-6).